We begin with the raw amino-acid sequence, 104 residues long: Small ribosomal subunit protein bS18c (104 aa).

The protein belongs to the bacterial ribosomal protein bS18 family. Part of the 30S ribosomal subunit.

The protein resides in the plastid. It is found in the chloroplast. The protein is Small ribosomal subunit protein bS18c of Lotus japonicus (Lotus corniculatus var. japonicus).